The primary structure comprises 75 residues: ATP synthase subunit c (75 aa).

The next 2 membrane-spanning stretches (helical) occupy residues 9–29 (IGAG…GNIW) and 52–72 (IGFA…LILL).

This sequence belongs to the ATPase C chain family. F-type ATPases have 2 components, F(1) - the catalytic core - and F(0) - the membrane proton channel. F(1) has five subunits: alpha(3), beta(3), gamma(1), delta(1), epsilon(1). F(0) has four main subunits: a(1), b(1), b'(1) and c(10-14). The alpha and beta chains form an alternating ring which encloses part of the gamma chain. F(1) is attached to F(0) by a central stalk formed by the gamma and epsilon chains, while a peripheral stalk is formed by the delta, b and b' chains.

Its subcellular location is the cell inner membrane. In terms of biological role, f(1)F(0) ATP synthase produces ATP from ADP in the presence of a proton or sodium gradient. F-type ATPases consist of two structural domains, F(1) containing the extramembraneous catalytic core and F(0) containing the membrane proton channel, linked together by a central stalk and a peripheral stalk. During catalysis, ATP synthesis in the catalytic domain of F(1) is coupled via a rotary mechanism of the central stalk subunits to proton translocation. Functionally, key component of the F(0) channel; it plays a direct role in translocation across the membrane. A homomeric c-ring of between 10-14 subunits forms the central stalk rotor element with the F(1) delta and epsilon subunits. In Rhodospirillum rubrum (strain ATCC 11170 / ATH 1.1.1 / DSM 467 / LMG 4362 / NCIMB 8255 / S1), this protein is ATP synthase subunit c.